Here is a 674-residue protein sequence, read N- to C-terminus: Probable nucleolar GTP-binding protein 1 (674 aa).

In terms of domain architecture, OBG-type G spans 169–346; the sequence is RTLLLTGYPN…VKDTACSILF (178 aa). Residues 175–182, 221–225, and 289–292 each bind GTP; these read GYPNVGKS, DTPGI, and NKID. Over residues 518–527 the composition is skewed to basic and acidic residues; that stretch reads RINHQIKDSS. 2 disordered regions span residues 518 to 538 and 564 to 674; these read RINHQIKDSSKPQLSKGRRGI and VRDH…NDFR. Positions 570–580 are enriched in basic residues; the sequence is SRISGKKRSRS. Basic and acidic residues-rich tracts occupy residues 619–633 and 641–653; these read GFHDLAQKEKADKLD and NQDGRKGESDRHV.

This sequence belongs to the TRAFAC class OBG-HflX-like GTPase superfamily. OBG GTPase family. NOG subfamily.

It is found in the nucleus. The protein localises to the nucleolus. In terms of biological role, involved in the biogenesis of the 60S ribosomal subunit. This chain is Probable nucleolar GTP-binding protein 1 (nog1), found in Dictyostelium discoideum (Social amoeba).